The following is a 218-amino-acid chain: Protein OPG170 (218 aa).

An N-terminal signal peptide occupies residues 1–16 (MYSLVFVILMCIPFSF). N-linked (GlcNAc...) asparagine; by host glycosylation occurs at Asn70.

It belongs to the orthopoxvirus OPG170 family.

It localises to the secreted. In terms of biological role, may interact with several cellular chemokines to interfere with chemokine-glycosaminoglycan (GAG) interactions at the cell surface to alter chemotaxis of nearby responsive cells. This is Protein OPG170 (OPG170) from Homo sapiens (Human).